The primary structure comprises 218 residues: Putative pre-16S rRNA nuclease (218 aa).

This sequence belongs to the YqgF nuclease family.

Its subcellular location is the cytoplasm. In terms of biological role, could be a nuclease involved in processing of the 5'-end of pre-16S rRNA. This chain is Putative pre-16S rRNA nuclease, found in Thermotoga maritima (strain ATCC 43589 / DSM 3109 / JCM 10099 / NBRC 100826 / MSB8).